A 463-amino-acid polypeptide reads, in one-letter code: uncharacterized protein (463 aa).

The region spanning 12 to 70 (LWQQGSVVELTITGLNHQGEGIGRFNERVVFVPDTAPGDRLEVRLVKVKRNYALAQLLK) is the TRAM domain. Positions 83, 89, 92, and 171 each coordinate [4Fe-4S] cluster. Residues glutamine 295, tyrosine 324, glutamate 345, and aspartate 390 each coordinate S-adenosyl-L-methionine. Cysteine 417 acts as the Nucleophile in catalysis.

This sequence belongs to the class I-like SAM-binding methyltransferase superfamily. RNA M5U methyltransferase family.

This is an uncharacterized protein from Synechocystis sp. (strain ATCC 27184 / PCC 6803 / Kazusa).